We begin with the raw amino-acid sequence, 125 residues long: MORF4 family-associated protein 1 (125 aa).

A disordered region spans residues 76–99 (ESALNHLQGAGGAEPRGPRAEKAD). Positions 94–124 (RAEKADEKAQEMAKMAEMLVQLVRRIEKSES) form a coiled coil.

It belongs to the MORF4 family-associated protein family. Found in a complex composed of MORF4L1, MRFAP1 and RB1. Interacts via its N-terminus with MORF4L1. Interacts with CSTB and MORF4L2. As to expression, widely expressed in all tissues examined and as early as 7 days during embryonic development.

The protein resides in the nucleus. It localises to the cytoplasm. It is found in the perinuclear region. The protein is MORF4 family-associated protein 1 of Mus musculus (Mouse).